We begin with the raw amino-acid sequence, 494 residues long: UDP-N-acetylmuramate--L-alanine ligase (494 aa).

140 to 146 lines the ATP pocket; the sequence is GTHGKTT.

The protein belongs to the MurCDEF family.

Its subcellular location is the cytoplasm. The catalysed reaction is UDP-N-acetyl-alpha-D-muramate + L-alanine + ATP = UDP-N-acetyl-alpha-D-muramoyl-L-alanine + ADP + phosphate + H(+). It participates in cell wall biogenesis; peptidoglycan biosynthesis. Its function is as follows. Cell wall formation. This chain is UDP-N-acetylmuramate--L-alanine ligase, found in Nostoc sp. (strain PCC 7120 / SAG 25.82 / UTEX 2576).